A 424-amino-acid polypeptide reads, in one-letter code: Caspase-2 (424 aa).

Residues 1-140 constitute a propeptide that is removed on maturation; that stretch reads MLGACGMQRY…IVEHSLDSGD (140 aa). The 90-residue stretch at 7 to 96 folds into the CARD domain; the sequence is MQRYHQEALK…QHLAEMILKT (90 aa). Catalysis depends on residues histidine 248 and cysteine 291. Residues 296–310 are compositionally biased toward basic and acidic residues; sequence TDRGVDQRDGKERSD. A disordered region spans residues 296–325; sequence TDRGVDQRDGKERSDSPGCEESDANKEENL.

It belongs to the peptidase C14A family. As to quaternary structure, heterotetramer that consists of two anti-parallel arranged heterodimers, each one formed by a p18 subunit and a p12 subunit.

It catalyses the reaction Strict requirement for an Asp residue at P1, with 316-Asp being essential for proteolytic activity and has a preferred cleavage sequence of Val-Asp-Val-Ala-Asp-|-.. In terms of biological role, involved in the activation cascade of caspases responsible for apoptosis execution. Might function by either activating some proteins required for cell death or inactivating proteins necessary for cell survival. This chain is Caspase-2 (CASP2), found in Gallus gallus (Chicken).